The following is a 2314-amino-acid chain: A-kinase anchor protein 6 (2314 aa).

Polar residues predominate over residues 1 to 12 (MLTMSVTLSPLR). Disordered regions lie at residues 1–25 (MLTMSVTLSPLRSQGPDPMATDASP), 285–432 (PSSC…DPPD), 505–613 (SLCR…PCHA), and 736–755 (TDEKSERPSSSEKNESHSAT). Residues 301-311 (SDDHKGEHGED) show a composition bias toward basic and acidic residues. Residues 319–330 (QLDSTVGMSSLD) are compositionally biased toward polar residues. A compositionally biased stretch (basic and acidic residues) spans 398–420 (ETQKNERKGSDRKGQVVDLKPEL). Residues 569 to 592 (SKASSSPPCSHSSESSLGSDSIKS) show a composition bias toward low complexity. Residues 736 to 753 (TDEKSERPSSSEKNESHS) are compositionally biased toward basic and acidic residues. Spectrin repeat units follow at residues 768–847 (QHQE…QLLE) and 1033–1148 (ILEK…LLDD). Position 1072 is a phosphoserine (S1072). The segment at 1349 to 1401 (CHSGDLSQNSGSESGIVSEGDNEMPTNSDMSLFSMVDGSPSNPETEHPDPQMG) is disordered. Over residues 1353-1363 (DLSQNSGSESG) the composition is skewed to polar residues. 2 positions are modified to phosphoserine: S1568 and S1593. Composition is skewed to basic and acidic residues over residues 1816–1831 (RSGVTDEIKVNKDGGG) and 1874–1891 (GENKKSTYDVSKDPHVAD). Disordered regions lie at residues 1816–1838 (RSGVTDEIKVNKDGGGNEKANPS), 1854–1926 (LSEN…KTIS), and 1940–2012 (SEDS…SGAR). The span at 1917–1926 (NLASNVKTIS) shows a compositional bias: polar residues. Residues 1944 to 1958 (SVARKEFCPPNDRHP) are compositionally biased toward basic and acidic residues. The interval 2062-2075 (IIDMASTALKSKSQ) is PKA-RII subunit binding domain. A disordered region spans residues 2166 to 2286 (EEAGLPGALP…NAKQPKGKVA (121 aa)). Over residues 2215 to 2226 (GADDAKEGDDVS) the composition is skewed to basic and acidic residues. A compositionally biased stretch (polar residues) spans 2227–2243 (HTSQGCAESTEPTTPSG).

In terms of assembly, interacts with RII subunit of PKA, phosphatase 2B (calcineurin) and AKAP79. Interacts with SYNPO2.

It is found in the sarcoplasmic reticulum. Its subcellular location is the nucleus membrane. Its function is as follows. Binds to type II regulatory subunits of protein kinase A and anchors/targets them to the nuclear membrane or sarcoplasmic reticulum. May act as an adapter for assembling multiprotein complexes. The chain is A-kinase anchor protein 6 (Akap6) from Rattus norvegicus (Rat).